The following is a 1070-amino-acid chain: RecBCD enzyme subunit RecC (1070 aa).

The protein belongs to the RecC family. In terms of assembly, heterotrimer of RecB, RecC and RecD. All subunits contribute to DNA-binding.

In terms of biological role, a helicase/nuclease that prepares dsDNA breaks (DSB) for recombinational DNA repair. Binds to DSBs and unwinds DNA via a highly rapid and processive ATP-dependent bidirectional helicase activity. Unwinds dsDNA until it encounters a Chi (crossover hotspot instigator) sequence from the 3' direction. Cuts ssDNA a few nucleotides 3' to the Chi site. The properties and activities of the enzyme are changed at Chi. The Chi-altered holoenzyme produces a long 3'-ssDNA overhang and facilitates RecA-binding to the ssDNA for homologous DNA recombination and repair. Holoenzyme degrades any linearized DNA that is unable to undergo homologous recombination. In the holoenzyme this subunit recognizes the wild-type Chi sequence, and when added to isolated RecB increases its ATP-dependent helicase processivity. The polypeptide is RecBCD enzyme subunit RecC (Buchnera aphidicola subsp. Acyrthosiphon pisum (strain APS) (Acyrthosiphon pisum symbiotic bacterium)).